Consider the following 346-residue polypeptide: Histidinol-phosphate aminotransferase (346 aa).

Position 209 is an N6-(pyridoxal phosphate)lysine (Lys209).

This sequence belongs to the class-II pyridoxal-phosphate-dependent aminotransferase family. Histidinol-phosphate aminotransferase subfamily. Homodimer. Requires pyridoxal 5'-phosphate as cofactor.

It catalyses the reaction L-histidinol phosphate + 2-oxoglutarate = 3-(imidazol-4-yl)-2-oxopropyl phosphate + L-glutamate. It participates in amino-acid biosynthesis; L-histidine biosynthesis; L-histidine from 5-phospho-alpha-D-ribose 1-diphosphate: step 7/9. The sequence is that of Histidinol-phosphate aminotransferase from Aliivibrio fischeri (strain ATCC 700601 / ES114) (Vibrio fischeri).